We begin with the raw amino-acid sequence, 398 residues long: Unsaturated chondroitin disaccharide hydrolase (398 aa).

Asp-115 serves as the catalytic Nucleophile. 8 residues coordinate substrate: Asp-115, Asp-175, Gly-233, Thr-235, Arg-247, Trp-251, Ser-365, and Ser-368. Asp-175 (proton donor) is an active-site residue.

Belongs to the glycosyl hydrolase 88 family. Monomer.

The enzyme catalyses beta-D-4-deoxy-Delta(4)-GlcpA-(1-&gt;3)-beta-D-GalpNAc6S + H2O = N-acetyl-beta-D-galactosamine 6-sulfate + 5-dehydro-4-deoxy-D-glucuronate. Functionally, catalyzes the hydrolysis of unsaturated hyaluronate and chondroitin disaccharides. Also degrades unsaturated heparin disaccharides. Releases 4-deoxy-4,5-didehydro D-glucuronic acid or 4-deoxy-4,5-didehydro L-iduronic acid from chondroitin disaccharides, hyaluronan disaccharides and heparin disaccharides and cleaves both glycosidic (1-&gt;3) and (1-&gt;4) bonds. Prefers sulfated glycosaminoglycans compared to unsulfated glycosaminoglycans. Probably required for mammalian cells invasion through the degradation of extracellular sulfated glycosaminoglycans such as chondroitin and hyaluronan. In Streptococcus agalactiae serotype III (strain NEM316), this protein is Unsaturated chondroitin disaccharide hydrolase.